The sequence spans 69 residues: UPF0150 protein AF_1072 (69 aa).

This sequence belongs to the UPF0150 family.

This chain is UPF0150 protein AF_1072, found in Archaeoglobus fulgidus (strain ATCC 49558 / DSM 4304 / JCM 9628 / NBRC 100126 / VC-16).